The primary structure comprises 153 residues: Cystatin-9 (153 aa).

A signal peptide spans 1 to 27; the sequence is MGRQRRCRWAQPWTLLLLLLGPRLLVT.

It belongs to the cystatin family.

It localises to the secreted. May play a role in hematopoietic differentiation or inflammation. The chain is Cystatin-9 (CST9) from Bos taurus (Bovine).